A 250-amino-acid polypeptide reads, in one-letter code: Envelope glycoprotein L (250 aa).

The N-terminal stretch at 1–18 (MELLLFVMSLILLTFSKA) is a signal peptide. Positions 31–239 (KLDDCIAAVI…ETYNSKLPFR (209 aa)) constitute a gL betaherpesvirus-type domain. Residues C136 and C141 are joined by a disulfide bond.

It belongs to the herpesviridae glycoprotein L (gL) family. Betaherpesvirinae gL subfamily. As to quaternary structure, interacts with glycoprotein H (gH); this interaction is necessary for the correct processing and cell surface expression of gH. Part of a gH-gL-gO complex.

The protein localises to the virion membrane. The protein resides in the host cell membrane. It localises to the host Golgi apparatus. Its subcellular location is the host trans-Golgi network. In terms of biological role, the heterodimer glycoprotein H-glycoprotein L is required for the fusion of viral and plasma membranes leading to virus entry into the host cell. Acts as a functional inhibitor of gH and maintains gH in an inhibited form. Upon binding to host integrins, gL dissociates from gH leading to activation of the viral fusion glycoproteins gB and gH. The chain is Envelope glycoprotein L from Human herpesvirus 6A (strain Uganda-1102) (HHV-6 variant A).